The following is a 370-amino-acid chain: MEHNILVINPGSTSDDIGYYKGPKTVFEESARYSQEELDSFAGKELSEQIPLRRKFLLDVLKKHEINLNEIDAVIGRGGLLKHIEGGIYTINEAMLADLKRGYNGHHPSNLGGILAREIAESLGKPCFIADPVVVDEMEPLARYTGFKEIKRKSIFHALNQKRVAITAAKELGKKYKECNFIVMHGGGGVSVGAHKKGKVIDVSDGFEGAGPMTPQRSGVLPSLELVEMCFSGQYTIQELRKKMRGRGGMIAHTGTSDIADLYNYISSGKKKPGSTINCSREAAQEAFDAMIYQISKEIGAMATVLKGDVDAIILTGGLAYNEYLVNMIKERTGFITDKFFVYPGGDEKAALKEAAARALENPEIIKQYK.

This sequence belongs to the acetokinase family.

It localises to the cytoplasm. The enzyme catalyses butanoate + ATP = butanoyl phosphate + ADP. This chain is Probable butyrate kinase, found in Elusimicrobium minutum (strain Pei191).